A 322-amino-acid chain; its full sequence is UDP-N-acetylenolpyruvoylglucosamine reductase (322 aa).

The FAD-binding PCMH-type domain occupies 36–202 (RAGGPAQVLF…TSVLFEGVPG (167 aa)). Residue arginine 182 is part of the active site. Serine 231 acts as the Proton donor in catalysis. Residue glutamate 301 is part of the active site.

It belongs to the MurB family. The cofactor is FAD.

It localises to the cytoplasm. The enzyme catalyses UDP-N-acetyl-alpha-D-muramate + NADP(+) = UDP-N-acetyl-3-O-(1-carboxyvinyl)-alpha-D-glucosamine + NADPH + H(+). It functions in the pathway cell wall biogenesis; peptidoglycan biosynthesis. Cell wall formation. The polypeptide is UDP-N-acetylenolpyruvoylglucosamine reductase (Brucella canis (strain ATCC 23365 / NCTC 10854 / RM-666)).